Consider the following 204-residue polypeptide: Small ribosomal subunit protein uS4 (204 aa).

Residues 25–47 (SPVNKREYGPGQHGQRRKKPSDY) form a disordered region. The region spanning 93-156 (RRLDAVVYRM…KQFAFVMEAA (64 aa)) is the S4 RNA-binding domain.

The protein belongs to the universal ribosomal protein uS4 family. In terms of assembly, part of the 30S ribosomal subunit. Contacts protein S5. The interaction surface between S4 and S5 is involved in control of translational fidelity.

Its function is as follows. One of the primary rRNA binding proteins, it binds directly to 16S rRNA where it nucleates assembly of the body of the 30S subunit. Functionally, with S5 and S12 plays an important role in translational accuracy. The protein is Small ribosomal subunit protein uS4 of Rhodospirillum centenum (strain ATCC 51521 / SW).